Consider the following 176-residue polypeptide: Disulfide bond formation protein B (176 aa).

At 1–14 (MLQFLNRCSKGRGA) the chain is on the cytoplasmic side. A helical membrane pass occupies residues 15–31 (WLLMALTALVLELVALY). Residues 32 to 49 (FQHVMLLQPCVMCIYERA) are Periplasmic-facing. C41 and C44 are disulfide-bonded. Residues 50–65 (ALFGILGASLLGAIAP) form a helical membrane-spanning segment. The Cytoplasmic segment spans residues 66-71 (KSPLRY). The helical transmembrane segment at 72 to 89 (LAIFIWIYSAWKGVQLAW) threads the bilayer. Over 90 to 144 (THTMLQLHPSPFTTCDFFVSFPSWLPLDKWFPAVFVASGDCAVKQWEFLSLEMPQ) the chain is Periplasmic. The cysteines at positions 104 and 130 are disulfide-linked. A helical transmembrane segment spans residues 145 to 163 (WLVGIFAAYLFIAILVLIS). Over 164-176 (QFVKPKRRDLFSR) the chain is Cytoplasmic.

Belongs to the DsbB family.

It localises to the cell inner membrane. Required for disulfide bond formation in some periplasmic proteins. Acts by oxidizing the DsbA protein. This is Disulfide bond formation protein B from Yersinia enterocolitica serotype O:8 / biotype 1B (strain NCTC 13174 / 8081).